A 287-amino-acid chain; its full sequence is ATP synthase gamma chain (287 aa).

Belongs to the ATPase gamma chain family. As to quaternary structure, F-type ATPases have 2 components, CF(1) - the catalytic core - and CF(0) - the membrane proton channel. CF(1) has five subunits: alpha(3), beta(3), gamma(1), delta(1), epsilon(1). CF(0) has three main subunits: a, b and c.

The protein resides in the cell inner membrane. Functionally, produces ATP from ADP in the presence of a proton gradient across the membrane. The gamma chain is believed to be important in regulating ATPase activity and the flow of protons through the CF(0) complex. This chain is ATP synthase gamma chain, found in Colwellia maris.